The sequence spans 66 residues: Large ribosomal subunit protein bL35 (66 aa).

It belongs to the bacterial ribosomal protein bL35 family.

In Synechococcus sp. (strain ATCC 27144 / PCC 6301 / SAUG 1402/1) (Anacystis nidulans), this protein is Large ribosomal subunit protein bL35.